The sequence spans 954 residues: Valine--tRNA ligase (954 aa).

The 'HIGH' region signature appears at 48-58 (PNVTGSLHMGH). Positions 560-564 (KMSKS) match the 'KMSKS' region motif. Residue K563 participates in ATP binding. Residues 883–954 (AGFINKEAEL…QTQYQAIENL (72 aa)) adopt a coiled-coil conformation.

This sequence belongs to the class-I aminoacyl-tRNA synthetase family. ValS type 1 subfamily. Monomer.

The protein localises to the cytoplasm. It carries out the reaction tRNA(Val) + L-valine + ATP = L-valyl-tRNA(Val) + AMP + diphosphate. Its function is as follows. Catalyzes the attachment of valine to tRNA(Val). As ValRS can inadvertently accommodate and process structurally similar amino acids such as threonine, to avoid such errors, it has a 'posttransfer' editing activity that hydrolyzes mischarged Thr-tRNA(Val) in a tRNA-dependent manner. This chain is Valine--tRNA ligase, found in Actinobacillus pleuropneumoniae serotype 3 (strain JL03).